The primary structure comprises 1130 residues: Serine/threonine-protein kinase LATS1 (1130 aa).

The span at 1 to 11 (MKRSEKPEGYR) shows a compositional bias: basic and acidic residues. Residues 1–71 (MKRSEKPEGY…PRQVRNPPKF (71 aa)) form a disordered region. Positions 19-30 (PASNYTVSSRQM) are enriched in polar residues. The segment covering 46–64 (DAAKAEHNMSKMSTEDPRQ) has biased composition (basic and acidic residues). The region spanning 100–141 (EVNPQMLQDLQAAGFDEDMVIQALQKTNNRSIEAAIEFISKM) is the UBA domain. Positions 149 to 276 (EQMAAAAARP…SWEPNSQTKR (128 aa)) are disordered. Residues 167–179 (NVQQSVNRKQSWK) show a composition bias toward polar residues. Residues 235–268 (NPPPPPQVRSVTPPPPPRGQTPPPRGTTPPPPSW) are compositionally biased toward pro residues. Phosphothreonine is present on Thr-246. Ser-278 is subject to Phosphoserine. 4 disordered regions span residues 294 to 321 (GAWQ…RGIS), 365 to 405 (AGTV…NGSI), 432 to 484 (NWPQ…PSAT), and 515 to 631 (THPS…ESRI). Residues 300-312 (YPPPPLNTSPMNP) show a composition bias toward pro residues. Positions 373 to 376 (PPPY) match the PPxY motif 1 motif. Residues 381-405 (ANGQSPSALQTGGSAAPSSYTNGSI) show a composition bias toward polar residues. Residues 434–447 (PQSSSAPAQSSPSS) show a composition bias toward low complexity. The segment covering 454-482 (WQPNIPVRSNSFNNPLGNRASHSANSQPS) has biased composition (polar residues). Phosphoserine; by NUAK1 and NUAK2 is present on Ser-464. The segment at 526-655 (TVQPSPFPEG…HVENVLKSHQ (130 aa)) is interaction with YAP1. The short motif at 556–559 (PPPY) is the PPxY motif 2 element. Over residues 579–609 (PSKEDQPSLPKEDESEKSYENVDSGDKEKKQ) the composition is skewed to basic and acidic residues. Ser-613 bears the Phosphoserine mark. A compositionally biased stretch (basic and acidic residues) spans 621–630 (KKDEERRESR). Ser-674 carries the post-translational modification Phosphoserine. In terms of domain architecture, Protein kinase spans 705–1010 (FVKIKTLGIG…ADEIKAHPFF (306 aa)). Residues 711-719 (LGIGAFGEV) and Lys-734 each bind ATP. The Proton acceptor role is filled by Asp-828. Ser-909 is subject to Phosphoserine; by STK3/MST2. One can recognise an AGC-kinase C-terminal domain in the interval 1011–1090 (KTIDFSSDLR…RRFFDDNGYP (80 aa)). Residue Thr-1079 is modified to Phosphothreonine; by STK3/MST2. Residues 1104–1130 (SQGSEQQSDEDDQNTGSEIKNRDLVYV) form a disordered region.

This sequence belongs to the protein kinase superfamily. AGC Ser/Thr protein kinase family. In terms of assembly, complexes with CDK1 in early mitosis. LATS1-associated CDK1 has no mitotic cyclin partner and no apparent kinase activity. Binds phosphorylated ZYX, locating this protein to the mitotic spindle and suggesting a role for actin regulatory proteins during mitosis. Binds to and colocalizes with LIMK1 at the actomyosin contractile ring during cytokinesis. Interacts (via PPxY motif 2) with YAP1 (via WW domains). Interacts with MOB1A and MOB1B. Interacts with LIMD1, WTIP and AJUBA. Interacts with ESR1, DCAF1 and DCAF13; probably recruits DCAF1 and DCAF13 to ESR1 to promote ESR1 ubiquitination and ubiquitin-mediated proteasomal degradation. Interacts with STK3/MST2; this interaction is inhibited in the presence of DLG5. Interacts with SCRIB in the presence of DLG5. Interacts with WWTR1/TAZ. Interacts with WWC1, WWC2 and WWC3 (via their WW domains). The cofactor is Mg(2+). Post-translationally, autophosphorylated and phosphorylated during M-phase of the cell cycle. Phosphorylated by STK3/MST2 at Ser-909 and Thr-1079, which results in its activation. Phosphorylated by MAP4Ks; in parallel to STK3/MST2 and resulting to its activation. Phosphorylation at Ser-464 by NUAK1 and NUAK2 leads to decreased protein level and is required to regulate cellular senescence and cellular ploidy. As to expression, expressed in all adult tissues examined except for lung and kidney.

Its subcellular location is the cytoplasm. The protein localises to the cytoskeleton. The protein resides in the microtubule organizing center. It localises to the centrosome. It is found in the spindle. Its subcellular location is the midbody. The protein localises to the spindle pole body. The catalysed reaction is L-seryl-[protein] + ATP = O-phospho-L-seryl-[protein] + ADP + H(+). The enzyme catalyses L-threonyl-[protein] + ATP = O-phospho-L-threonyl-[protein] + ADP + H(+). Negative regulator of YAP1 in the Hippo signaling pathway that plays a pivotal role in organ size control and tumor suppression by restricting proliferation and promoting apoptosis. The core of this pathway is composed of a kinase cascade wherein STK3/MST2 and STK4/MST1, in complex with its regulatory protein SAV1, phosphorylates and activates LATS1/2 in complex with its regulatory protein MOB1, which in turn phosphorylates and inactivates YAP1 oncoprotein and WWTR1/TAZ. Phosphorylation of YAP1 by LATS1 inhibits its translocation into the nucleus to regulate cellular genes important for cell proliferation, cell death, and cell migration. Acts as a tumor suppressor which plays a critical role in maintenance of ploidy through its actions in both mitotic progression and the G1 tetraploidy checkpoint. Negatively regulates G2/M transition by down-regulating CDK1 kinase activity. Involved in the control of p53 expression. Affects cytokinesis by regulating actin polymerization through negative modulation of LIMK1. May also play a role in endocrine function. Plays a role in mammary gland epithelial cell differentiation, both through the Hippo signaling pathway and the intracellular estrogen receptor signaling pathway by promoting the degradation of ESR1. Acts as an activator of the NLRP3 inflammasome by mediating phosphorylation of 'Ser-265' of NLRP3 following NLRP3 palmitoylation, promoting NLRP3 activation by NEK7. This is Serine/threonine-protein kinase LATS1 from Homo sapiens (Human).